We begin with the raw amino-acid sequence, 557 residues long: Probable WRKY transcription factor 20 (557 aa).

Positions 1–12 (MNPQANDRKEFQ) are enriched in basic and acidic residues. Disordered stretches follow at residues 1-36 (MNPQ…GGGA) and 76-215 (KPEP…DGYN). Residues 95–114 (SASSSSYTGRGFHQNTFTEQ) are compositionally biased toward polar residues. A compositionally biased stretch (low complexity) spans 151-169 (SSHSPSSISDAAGSSSELS). The span at 193 to 207 (SIQTSQNDSRGSTPS) shows a compositional bias: polar residues. Positions 205–269 (TPSILADDGY…YKGTHDHPKP (65 aa)) form a DNA-binding region, WRKY 1. Residues cysteine 236, cysteine 241, histidine 264, and histidine 266 each contribute to the Zn(2+) site. Positions 257 to 348 (DIIYKGTHDH…PDDDDPFSKR (92 aa)) are disordered. Positions 282–299 (QEERLDKYPSSTGRDEKG) are enriched in basic and acidic residues. A compositionally biased stretch (polar residues) spans 303–314 (YNLSNPNEQTGN). Over residues 321-332 (SASDDGGEAAAS) the composition is skewed to low complexity. Residues 375–440 (SEVDILDDGY…YEGKHDHDVP (66 aa)) constitute a DNA-binding region (WRKY 2). Positions 406, 411, 435, and 437 each coordinate Zn(2+). Disordered regions lie at residues 433–486 (GKHD…QHQN) and 520–557 (NQYG…QSGP). Over residues 520-536 (NQYGQRETKNETQNGDI) the composition is skewed to polar residues.

This sequence belongs to the WRKY group I family.

It is found in the nucleus. Functionally, transcription factor. Interacts specifically with the W box (5'-(T)TGAC[CT]-3'), a frequently occurring elicitor-responsive cis-acting element. The polypeptide is Probable WRKY transcription factor 20 (WRKY20) (Arabidopsis thaliana (Mouse-ear cress)).